The chain runs to 145 residues: Deoxyuridine 5'-triphosphate nucleotidohydrolase (145 aa).

Substrate-binding positions include 62–64 (RSG), asparagine 75, 79–81 (TVD), and lysine 89.

This sequence belongs to the dUTPase family. The cofactor is Mg(2+).

The catalysed reaction is dUTP + H2O = dUMP + diphosphate + H(+). The protein operates within pyrimidine metabolism; dUMP biosynthesis; dUMP from dCTP (dUTP route): step 2/2. Functionally, this enzyme is involved in nucleotide metabolism: it produces dUMP, the immediate precursor of thymidine nucleotides and it decreases the intracellular concentration of dUTP so that uracil cannot be incorporated into DNA. In Helicobacter pylori (strain P12), this protein is Deoxyuridine 5'-triphosphate nucleotidohydrolase.